A 164-amino-acid chain; its full sequence is 5-formyltetrahydrofolate cyclo-ligase (164 aa).

3-7 provides a ligand contact to ATP; that stretch reads KNALR. Residues Glu-50 and Glu-55 each contribute to the substrate site. Residue 115–123 coordinates ATP; that stretch reads RLGFGKGYY. Asp-124 provides a ligand contact to Mg(2+). Arg-125 and Trp-153 together coordinate ATP. Asp-154 provides a ligand contact to Mg(2+).

The protein belongs to the 5-formyltetrahydrofolate cyclo-ligase family. As to quaternary structure, monomer or homodimer. Mg(2+) is required as a cofactor. The cofactor is Mn(2+). Requires Ca(2+) as cofactor. It depends on Zn(2+) as a cofactor. Fe(2+) serves as cofactor. Co(2+) is required as a cofactor. The cofactor is Cu(2+).

It is found in the cytoplasm. The enzyme catalyses (6S)-5-formyl-5,6,7,8-tetrahydrofolate + ATP = (6R)-5,10-methenyltetrahydrofolate + ADP + phosphate. Functionally, involved in folate metabolism. Catalyzes the irreversible conversion of 5-formyltetrahydrofolate (5-FTHF) to yield 5,10-methenyltetrahydrofolate. The polypeptide is 5-formyltetrahydrofolate cyclo-ligase (Mycoplasma pneumoniae (strain ATCC 29342 / M129 / Subtype 1) (Mycoplasmoides pneumoniae)).